The primary structure comprises 22 residues: Mu-conotoxin KIIIB (22 aa).

Residues 1-2 constitute a propeptide that is removed on maturation; it reads KR. 7 cysteine pairs are disulfide-bonded: cysteine 5-cysteine 13, cysteine 5-cysteine 19, cysteine 5-cysteine 20, cysteine 6-cysteine 13, cysteine 6-cysteine 19, cysteine 8-cysteine 19, and cysteine 8-cysteine 20. Pharmacophore key residues stretches follow at residues 14 to 16 and 18 to 19; these read RDH and RC. Residue cysteine 20 is modified to Cysteine amide.

Belongs to the conotoxin M superfamily. Monomer. In terms of processing, toxins with three different disulfide connectivities have been synthesized. The conotoxin mu-KIIIA-P1 shows the connectivity C1-C5, C2-C4, and C3-C6, whereas mu-KIIIA-P2 shows the connectivity C1-C6, C2-C4, and C3-C5. The conotoxin mu-KIIIA-N has the 'native' fold of the mu-conotoxin family (C1-C4, C2-C5, and C3-C6). Mu-KIIIA-P1 and mu-KIIIA-P2 are obtained by both thermodynamic oxidative folding and regioselective synthesis. Mu-KIIIA-P1 is the major oxidative folding product. Mu-KIIIA-N is only obtained by regioselective synthesis. Expressed by the venom duct.

It localises to the secreted. Its function is as follows. Mu-conotoxin KIIIA-P1: mu-conotoxins block voltage-gated sodium channels (Nav). This toxin potently blocks Nav1.2/SCN2A (IC(50)5-124 nM), Nav1.4/SCN4A (IC(50)=20-90 nM), and Nav1.7/SCN9A (IC(50)=290-413 nM). It moderately blocks Nav1.1/SCN1A, and mNav1.6/SCN8A. It also shows a very low activity on Nav1.3/SCN3A. This toxin binds a microsite within the pore different from the tetrodotoxin binding site 1 (tested on Nav1.2). The block is partial, with a residual current that can be completely blocked by TTX. The toxin probably docks at a more superficial site in the outer vestibule of the channel than does TTX. On rNav1.2/SCN2A, it produces a block that is only partially reversible. The block of Nav1.7 is modified when beta-subunits are coexpressed with the alpha subunit. Hence, blocks of channels containing beta-1 and beta-3 subunits are more potent (compared to channels without beta subunits), whereas blocks of channels containing beta-2 and beta-4 subunits are less potent (compared to channels without beta subunits). In terms of biological role, mu-conotoxin KIIIA-P2: This toxin potently blocks Nav1.2/SCN2A (Kd=230 nM, IC(50)=1.37 uM) and Nav1.4/SCN4A (Kd=830 nM, IC(50)=2 uM). It also moderately blocks Nav1.7/SCN9A (Kd=1.57 uM, IC(50)=5.4 uM). In addition, this toxin may also inhibit other sodium channels, as does Mu-conotoxin KIIIA-P1. Functionally, mu-conotoxin KIIIA-N: This toxin moderately blocks Nav1.2/SCN2A (IC(50)=875 nM), Nav1.4/SCN4A (IC(50)=472 nM), and Nav1.7/SCN9A (IC(50)=887 nM). Mu-conotoxin KIIIB-P1: This toxin potently blocks Nav1.2/SCN2A (Kd=470 nM). In addition, this toxin may also inhibit other sodium channels, as does Mu-conotoxin KIIIA-P1. Its function is as follows. Mu-conotoxin KIIIB-P2: This toxin potently blocks Nav1.2/SCN2A (Kd=26 nM). In addition, this toxin may also inhibit other sodium channels, as does Mu-conotoxin KIIIA-P1. In Conus kinoshitai (Kinoshita's cone), this protein is Mu-conotoxin KIIIB.